Reading from the N-terminus, the 372-residue chain is MEIVRVEPTPSPNTMKIVLNEKRKDNKSNTYTTILDNQPKFINDVLAVDGVKSIFYVMDFLAVDKKPKYDWEVLLPKVTATLSDESESIDTPAPDEHFGEVKAEVLQFKGIPYQVKLTSSSEEKRKQLPEVYIDSMLAAQKDDDNIVFQRKWENLGIRYGELDDIMSEVTEEILALYPEKDLNHLVENALNTDVVIPEKKYQHVTLETYQATDDWKERLRMLKAFPTPTERDFPLLGDAVSEEEKTPLRREAIVLLGMIEDKAVLPYLFKGLHDKSPAVRRTAGDCLSDLGFKQALPEMEKALDDPHKIVRWRAAMFIFDEGGPEQLDALRTHENDPAYEVKLQIEMAIARIENGDEALGSVWKQIANRNKS.

The protein belongs to the CvfC family.

The polypeptide is Conserved virulence factor C (cvfC) (Staphylococcus saprophyticus subsp. saprophyticus (strain ATCC 15305 / DSM 20229 / NCIMB 8711 / NCTC 7292 / S-41)).